The following is a 610-amino-acid chain: Myoneurin (610 aa).

The BTB domain maps to 24–89; that stretch reads CDCTVVIGEF…IYTGTLNLDS (66 aa). A disordered region spans residues 156–199; that stretch reads SEVSTDSVQANPKPRALTKKSSQSKKKKKAFSSQKPGQSKAVQY. A compositionally biased stretch (basic residues) spans 171–185; that stretch reads ALTKKSSQSKKKKKA. 2 consecutive short sequence motifs (nuclear localization signal) follow at residues 174 to 190 and 257 to 262; these read KKSS…SSQK and KRKRRK. C2H2-type zinc fingers lie at residues 302–324, 330–352, 358–381, 387–409, 415–437, 443–465, 471–493, and 499–522; these read PMCN…MRIH, YVCH…VRTH, YKCE…RMHH, YKCD…ARKH, YVCD…VRRH, YVCD…SRKH, YICG…FRSH, and FICE…TKVH. The disordered stretch occupies residues 519–548; the sequence is TKVHSGTDKNPDCSVDDHAVSEQDSVQRSP. Over residues 523-539 the composition is skewed to basic and acidic residues; it reads SGTDKNPDCSVDDHAVS.

It belongs to the krueppel C2H2-type zinc-finger protein family. As to expression, mainly expressed in the neuromuscular system. Located in and around synaptic myonuclei in adult muscle. Expression is dysregulated after nerve injury. Also found in the cerebellum, testis, heart, brain and liver.

It localises to the nucleus. The polypeptide is Myoneurin (Mynn) (Mus musculus (Mouse)).